We begin with the raw amino-acid sequence, 92 residues long: MGRSLKKGPFIADHLLSKIEKLNDKNEKQVIKTWSRASTILPLMVGHTIAVHNGRQHVPVFISEQMVGHKLGEFAPTRTYRGHGKSDKKAGR.

It belongs to the universal ribosomal protein uS19 family.

Its function is as follows. Protein S19 forms a complex with S13 that binds strongly to the 16S ribosomal RNA. This Trichormus variabilis (strain ATCC 29413 / PCC 7937) (Anabaena variabilis) protein is Small ribosomal subunit protein uS19.